The sequence spans 201 residues: Receptor expression-enhancing protein 1 (201 aa).

A run of 2 helical transmembrane segments spans residues 1 to 21 and 35 to 55; these read MVSWIISRLVVLIFGTLYPAY and YVKWMMYWIIFALFTTAETFT. Position 152 is a phosphoserine (serine 152). Residues 158–201 are disordered; sequence TIRGDGAPAPSGPPPPGTGRSSGKHSQPKMSRSASESAGSSGTA. The segment covering 188–201 has biased composition (low complexity); it reads SRSASESAGSSGTA.

It belongs to the DP1 family. In terms of assembly, interacts with OLFR992. Interacts with SPAST and ATL1. Interacts (via C-terminus) with microtubules. Interacts with ZFYVE27. In terms of tissue distribution, detected in olfactory sensory neurons of the olfactory epithelium, and in total brain.

It is found in the membrane. Its subcellular location is the mitochondrion membrane. The protein localises to the endoplasmic reticulum. Functionally, required for endoplasmic reticulum (ER) network formation, shaping and remodeling; it links ER tubules to the cytoskeleton. May also enhance the cell surface expression of odorant receptors. This chain is Receptor expression-enhancing protein 1 (Reep1), found in Mus musculus (Mouse).